The following is a 194-amino-acid chain: Orotate phosphoribosyltransferase (194 aa).

Residues Arg102, Lys103, Lys106, His108, and Glu129–Ser137 contribute to the 5-phospho-alpha-D-ribose 1-diphosphate site. Orotate-binding residues include Thr133 and Arg161.

Belongs to the purine/pyrimidine phosphoribosyltransferase family. PyrE subfamily. As to quaternary structure, homodimer. Mg(2+) is required as a cofactor.

It catalyses the reaction orotidine 5'-phosphate + diphosphate = orotate + 5-phospho-alpha-D-ribose 1-diphosphate. The protein operates within pyrimidine metabolism; UMP biosynthesis via de novo pathway; UMP from orotate: step 1/2. Functionally, catalyzes the transfer of a ribosyl phosphate group from 5-phosphoribose 1-diphosphate to orotate, leading to the formation of orotidine monophosphate (OMP). In Synechococcus sp. (strain CC9902), this protein is Orotate phosphoribosyltransferase.